A 649-amino-acid chain; its full sequence is Acetyl-coenzyme A synthetase (649 aa).

CoA contacts are provided by residues 191 to 194 (RGGR), threonine 309, and asparagine 333. Residues 385–387 (GEP), 409–414 (DTWWQT), aspartate 498, and arginine 513 each bind ATP. Residue serine 521 coordinates CoA. An ATP-binding site is contributed by arginine 524. Valine 535, histidine 537, and valine 540 together coordinate Mg(2+). Arginine 582 contacts CoA. An N6-acetyllysine modification is found at lysine 607.

The protein belongs to the ATP-dependent AMP-binding enzyme family. Mg(2+) is required as a cofactor. In terms of processing, acetylated. Deacetylation by the SIR2-homolog deacetylase activates the enzyme.

It carries out the reaction acetate + ATP + CoA = acetyl-CoA + AMP + diphosphate. In terms of biological role, catalyzes the conversion of acetate into acetyl-CoA (AcCoA), an essential intermediate at the junction of anabolic and catabolic pathways. AcsA undergoes a two-step reaction. In the first half reaction, AcsA combines acetate with ATP to form acetyl-adenylate (AcAMP) intermediate. In the second half reaction, it can then transfer the acetyl group from AcAMP to the sulfhydryl group of CoA, forming the product AcCoA. This chain is Acetyl-coenzyme A synthetase, found in Novosphingobium aromaticivorans (strain ATCC 700278 / DSM 12444 / CCUG 56034 / CIP 105152 / NBRC 16084 / F199).